Consider the following 486-residue polypeptide: MVATPSTSSQTKGVVRQVIGPVLDVEFPAGKLPKILNALRIEAKNPAGQDIALTAEVQQLLGDHRVRAVAMSGTDGLVRGMEAIDTGAPISVPVGEATLGRIFNVLGEPVDEQGPVNTKDTAPIHRAAPKLTDLETKPKVFETGIKVIDLLAPYRQGGKVGLFGGAGVGKTVLIQELINNIAKEHGGVSVFGGVGERTREGNDLYEEFKESGVINADDLTQSKVALCFGQMNEPPGARMRVGLSALTMAEHFRDVNKQDVLLFVDNIFRFVQAGSEVSALLGRMPSAVGYQPTLGTDVGELQERITSTLEGSITSIQAVYVPADDLTDPAPATTFAHLDATTVLARALAAKGIYPAVDPLDSTSTMLQPSVVGDEHYKTARAVQSTLQRYKELQDIIAILGLDELSEEDRLTVDRARKIEKFLSQPFFVAEIFTGMSGKYVKLEDTIAGFNMILSGELDDLPEQAFYLVGNIDEVKAKAEKIKSEK.

164–171 (GGAGVGKT) contacts ATP.

The protein belongs to the ATPase alpha/beta chains family. F-type ATPases have 2 components, CF(1) - the catalytic core - and CF(0) - the membrane proton channel. CF(1) has five subunits: alpha(3), beta(3), gamma(1), delta(1), epsilon(1). CF(0) has four main subunits: a(1), b(1), b'(1) and c(9-12).

It is found in the cellular thylakoid membrane. It catalyses the reaction ATP + H2O + 4 H(+)(in) = ADP + phosphate + 5 H(+)(out). Its function is as follows. Produces ATP from ADP in the presence of a proton gradient across the membrane. The catalytic sites are hosted primarily by the beta subunits. The sequence is that of ATP synthase subunit beta from Prochlorococcus marinus (strain MIT 9301).